The sequence spans 358 residues: Ribosomal RNA-processing protein 8 (358 aa).

The disordered stretch occupies residues 1–81; the sequence is MKPFEVPPWE…PQDSSDDDYE (81 aa). A compositionally biased stretch (basic residues) spans 30-44; it reads AKKKPKKKKPKKKKA. Residues S75 and S76 each carry the phosphoserine modification. H185, G220, D238, and C267 together coordinate S-adenosyl-L-methionine.

This sequence belongs to the methyltransferase superfamily. RRP8 family.

The protein localises to the nucleus. The protein resides in the nucleolus. Probable methyltransferase required to silence rDNA. This chain is Ribosomal RNA-processing protein 8, found in Drosophila melanogaster (Fruit fly).